Consider the following 196-residue polypeptide: Putative NADH dehydrogenase/NAD(P)H nitroreductase PXO_03909 (196 aa).

The protein belongs to the nitroreductase family. HadB/RutE subfamily. FMN is required as a cofactor.

This Xanthomonas oryzae pv. oryzae (strain PXO99A) protein is Putative NADH dehydrogenase/NAD(P)H nitroreductase PXO_03909.